The primary structure comprises 502 residues: Lysine--tRNA ligase (502 aa).

Glu403 and Glu410 together coordinate Mg(2+).

The protein belongs to the class-II aminoacyl-tRNA synthetase family. In terms of assembly, homodimer. It depends on Mg(2+) as a cofactor.

The protein localises to the cytoplasm. The catalysed reaction is tRNA(Lys) + L-lysine + ATP = L-lysyl-tRNA(Lys) + AMP + diphosphate. The polypeptide is Lysine--tRNA ligase (Synechococcus sp. (strain CC9902)).